Reading from the N-terminus, the 451-residue chain is Exodeoxyribonuclease 7 large subunit (451 aa).

This sequence belongs to the XseA family. In terms of assembly, heterooligomer composed of large and small subunits.

The protein localises to the cytoplasm. The catalysed reaction is Exonucleolytic cleavage in either 5'- to 3'- or 3'- to 5'-direction to yield nucleoside 5'-phosphates.. In terms of biological role, bidirectionally degrades single-stranded DNA into large acid-insoluble oligonucleotides, which are then degraded further into small acid-soluble oligonucleotides. In Neisseria gonorrhoeae (strain ATCC 700825 / FA 1090), this protein is Exodeoxyribonuclease 7 large subunit.